The primary structure comprises 514 residues: Peptide chain release factor 3 (514 aa).

Residues 8-268 (KKRRTFAIIS…TFLEFAPEPH (261 aa)) form the tr-type G domain. GTP-binding positions include 17–24 (SHPDAGKT), 85–89 (DTPGH), and 139–142 (NKLD).

This sequence belongs to the TRAFAC class translation factor GTPase superfamily. Classic translation factor GTPase family. PrfC subfamily.

Its subcellular location is the cytoplasm. Functionally, increases the formation of ribosomal termination complexes and stimulates activities of RF-1 and RF-2. It binds guanine nucleotides and has strong preference for UGA stop codons. It may interact directly with the ribosome. The stimulation of RF-1 and RF-2 is significantly reduced by GTP and GDP, but not by GMP. This Streptococcus uberis (strain ATCC BAA-854 / 0140J) protein is Peptide chain release factor 3.